The primary structure comprises 197 residues: MTQLYLASASPRRRELLTQLDIPFSVLNVAVKEQRLPEEAAEVYVRRLAHEKATAGVAAAPSDLPVLGADTIVVLNGQVLEKPQDETHAAEMLGQLSGKQHQVMTAVALADKDDILSCLVITDVVFRPLSQQDIERYIASGEPMDKAGAYGIQGKGGCFVRSLNGSYYAVVGLPLVETDELFSNFAALRSARGKHDC.

D70 (proton acceptor) is an active-site residue.

This sequence belongs to the Maf family. YhdE subfamily. The cofactor is a divalent metal cation.

It localises to the cytoplasm. It carries out the reaction dTTP + H2O = dTMP + diphosphate + H(+). The enzyme catalyses UTP + H2O = UMP + diphosphate + H(+). Its function is as follows. Nucleoside triphosphate pyrophosphatase that hydrolyzes dTTP and UTP. May have a dual role in cell division arrest and in preventing the incorporation of modified nucleotides into cellular nucleic acids. The sequence is that of dTTP/UTP pyrophosphatase from Pectobacterium atrosepticum (strain SCRI 1043 / ATCC BAA-672) (Erwinia carotovora subsp. atroseptica).